Consider the following 398-residue polypeptide: L-talarate/galactarate dehydratase (398 aa).

Substrate-binding positions include 46–48, 82–83, and Lys-195; these read DAK and KR. The active-site Proton acceptor is the Lys-197. Residue Asp-226 participates in Mg(2+) binding. Position 228 (Asn-228) interacts with substrate. Residues Glu-252 and Glu-278 each contribute to the Mg(2+) site. His-328 functions as the Proton donor/acceptor in the catalytic mechanism. Glu-348 is a substrate binding site.

This sequence belongs to the mandelate racemase/muconate lactonizing enzyme family. As to quaternary structure, homooctamer; tetramer of dimers. Mg(2+) is required as a cofactor.

The enzyme catalyses L-altrarate = 5-dehydro-4-deoxy-D-glucarate + H2O. It catalyses the reaction galactarate = 5-dehydro-4-deoxy-D-glucarate + H2O. It carries out the reaction L-altrarate = galactarate. Its activity is regulated as follows. Competitively inhibited by tartronate. Functionally, catalyzes the efficient dehydration of both L-talarate (also called L-altrarate) and galactarate to 5-keto-4-deoxy-D-glucarate (5-KDG). Also catalyzes the epimerization of L-talarate to galactarate; epimerization occurs in competition with dehydration. Is required for the utilization of L-talarate as a carbon source. Also functions in galactarate utilization. Is not active on other acid sugars. This is L-talarate/galactarate dehydratase from Salmonella typhimurium (strain LT2 / SGSC1412 / ATCC 700720).